The following is a 344-amino-acid chain: Anthranilate phosphoribosyltransferase (344 aa).

5-phospho-alpha-D-ribose 1-diphosphate contacts are provided by residues Gly84, 87-88 (GD), Ser92, 94-97 (NIST), 112-120 (KHGNRSASG), and Ser124. Gly84 provides a ligand contact to anthranilate. A Mg(2+)-binding site is contributed by Ser96. Asn115 serves as a coordination point for anthranilate. Anthranilate is bound at residue Arg170. Residues Asp229 and Glu230 each contribute to the Mg(2+) site.

This sequence belongs to the anthranilate phosphoribosyltransferase family. In terms of assembly, homodimer. It depends on Mg(2+) as a cofactor.

The catalysed reaction is N-(5-phospho-beta-D-ribosyl)anthranilate + diphosphate = 5-phospho-alpha-D-ribose 1-diphosphate + anthranilate. It participates in amino-acid biosynthesis; L-tryptophan biosynthesis; L-tryptophan from chorismate: step 2/5. Functionally, catalyzes the transfer of the phosphoribosyl group of 5-phosphorylribose-1-pyrophosphate (PRPP) to anthranilate to yield N-(5'-phosphoribosyl)-anthranilate (PRA). This is Anthranilate phosphoribosyltransferase from Synechococcus sp. (strain RCC307).